The following is a 223-amino-acid chain: All-trans retinoic acid-induced differentiation factor (223 aa).

The first 25 residues, 1–25, serve as a signal peptide directing secretion; that stretch reads MASRESGGSRAAALLLVLGVERALA. Over 26 to 193 the chain is Extracellular; the sequence is LPEICTLCPG…YKCMRQGSFS (168 aa). The EGF-like domain maps to 146-187; the sequence is QRDLCNSTGSPEMCPENGSCASDGPGLLQCVCADGFHGYKCM. Disulfide bonds link cysteine 150-cysteine 165, cysteine 159-cysteine 175, and cysteine 177-cysteine 186. Residues 194–214 traverse the membrane as a helical segment; sequence LLMFFGILGSTTLAISILLWG. Over 215-223 the chain is Cytoplasmic; it reads TQRRKAKAS.

In terms of assembly, interacts with NELL1; the interaction promotes osteoblastic differentiation and mineralization. Interacts with SLC37A3; the interaction is direct and both proteins are mutually dependent for their stability.

Its subcellular location is the nucleus envelope. It is found in the cell membrane. The protein resides in the lysosome membrane. Its function is as follows. Promotes osteoblast cell differentiation and terminal mineralization. Plays a role in inducing the cell cycle arrest via inhibiting CCND1 expression in all-trans-retinoic acid (ATRA) signal pathway. In osteoclasts, forms a transporter complex with ATRAID for nitrogen-containing-bisphophonates (N-BPs) required for releasing N-BP molecules that have trafficked to lysosomes through fluid-phase endocytosis into the cytosol. The chain is All-trans retinoic acid-induced differentiation factor (Atraid) from Mus musculus (Mouse).